We begin with the raw amino-acid sequence, 363 residues long: Adenosine deaminase (363 aa).

Zn(2+) is bound by residues His42 and His44. Residues 44–46 (HLD), Asp172, and Gly201 contribute to the a purine D-ribonucleoside site. Residues 170–184 (IGDTGHEAANIKASA) are gating helix loop; regulates binding affinity for substrates and thus substrate selectivity. His226 is a Zn(2+) binding site. A purine D-ribonucleoside contacts are provided by Glu229, His253, and Asp310. Asp310 contacts Zn(2+).

The protein belongs to the metallo-dependent hydrolases superfamily. Adenosine and AMP deaminases family. Requires Zn(2+) as cofactor.

The enzyme catalyses adenosine + H2O + H(+) = inosine + NH4(+). The catalysed reaction is S-methyl-5'-thioadenosine + H2O + H(+) = S-methyl-5'-thioinosine + NH4(+). It participates in purine metabolism; purine nucleoside salvage. Inhibited by coformycin and methylthiocoformycin (MT-coformycin). Catalyzes the hydrolytic deamination of adenosine to produce inosine. Unlike mammalian adenosine deaminases, also catalyzes the deamination of 5'-methylthioadenosine (MTA), a by-product of polyamine biosynthesis, to produce 5'-methylthioinosine (MTI). Plays an essential role in the purine salvage pathway which allows the parasite to use host cell purines for the synthesis of nucleic acids. The sequence is that of Adenosine deaminase from Plasmodium vivax (strain Salvador I).